Here is a 348-residue protein sequence, read N- to C-terminus: RNA 3'-terminal phosphate cyclase (348 aa).

ATP-binding positions include Gln107 and 290–294 (HLADQ). His316 functions as the Tele-AMP-histidine intermediate in the catalytic mechanism.

This sequence belongs to the RNA 3'-terminal cyclase family. Type 1 subfamily.

The protein localises to the cytoplasm. The catalysed reaction is a 3'-end 3'-phospho-ribonucleotide-RNA + ATP = a 3'-end 2',3'-cyclophospho-ribonucleotide-RNA + AMP + diphosphate. Its function is as follows. Catalyzes the conversion of 3'-phosphate to a 2',3'-cyclic phosphodiester at the end of RNA. The mechanism of action of the enzyme occurs in 3 steps: (A) adenylation of the enzyme by ATP; (B) transfer of adenylate to an RNA-N3'P to produce RNA-N3'PP5'A; (C) and attack of the adjacent 2'-hydroxyl on the 3'-phosphorus in the diester linkage to produce the cyclic end product. The biological role of this enzyme is unknown but it is likely to function in some aspects of cellular RNA processing. The chain is RNA 3'-terminal phosphate cyclase from Nostoc punctiforme (strain ATCC 29133 / PCC 73102).